The following is a 1905-amino-acid chain: MNKQYFLSLFSTLAVALTLSGCWDKKQDEANAIQFNVNPIEITNYDETPKEVYPLVISFSGPAAPITSVNKELTQGISIEPALKGKWVWNSDTLLSFKPETDWPTGQDYRVKIDKKILNPQLHYTQKLNEPVVFKTPEFKATLVEQYFHQDPTQAQVRHAIFKLSFTHPVDRQKFEKALQVNLVRKNNDNTQNILSPLKFNVRYGEKDLVAWVNSDNVALAQSDNQYIEVKIDKNLTALLGNNSLETDIISSVKVPTKYSLDFSTGILIAQNEKNEAEQVLHLNFTHSIKGNELEKHISAYLLPEFTPENHPHWRYNLISRDVLQHAVAVPLQRLATETTYANQQSFKLDIPEKRCLYIEVQNKITALGGYEMKGALGDLACAPDYPKYVGFVGKGSILSSIGERKVTIATRNFTKVKLEIGRIQEEQLRHLIALNQGNFQNPDLGQLKIDNIADFFTKNYTLNNKKPQETTYLGIDLEKIVKQAEPAMGIYWLKVTGDSDNPNSTLRDTSQHMDWRNDASNQFSDYRLIVISDLGVIAKKAVDGTQSVFVQSISRGEPVEGATVSVISRNGSIIKSDYTNEQGVVNFSSLAHFKQELAPVMYLVSTQESLSFLPIDKYDRNLDYSRFDVGGIYASENAASLKAYLFNDRGIYRPNETLHTGIITKAQDWQLALNNIPLQFNLYSPSGMLMHKQTIRLEKSGLNSVSFTLPETAETGEWFAELLVTEKNNQTEIGSMTFQVQEFQPDNLKIKTTFNQAHAEGWVAPQDLVATVQLANLFGTPAQNRKVQANLTLQPLLPKFSQYADYRFFDNQRNKSAILYETELNEQVTDKEGKAHFPIDLTQYAENTAQMLYFTADGFENDSGRAVSTVKSVMVSAQPWLIGYQTKNDLAYLKRNTPAVVNFIAVNPKLEKVAVEHLKATLLERKYVSVLTQQASGAYKYESKLIENEIEQTTLQINATGTDFTLNTGKSGDYVLVLSNEHDQEVNRIHYAVIGNQNVSVAMDKNTELKLRLNKKQFKPHEEIEIAIHAPYAGTGLITIESDRVYAHKWFKATTNSSVQRIQLPENFEGTGYVNVQFSRDIHSDDIFTSPLSYGVVPFTVNVDNRRLKLQLDSPKKVKSGETVEFKLSSDKPSKALIYAVNEGILQVAGYQFTDPLSYFFPKYALQVQTAQILDLILPEFSKVMQFAQTGGDADMNMELAMKMAMANMNPFKRKTDKPVAYWSGIVDIHGEKTVSYQIPEEFNGNLKVMAIALSHDGKHLGHVATETLVRNDLILSPTVPLTLTPGDESEINVVIANNTNKAQRVNLKATLEPQLSFIGEAEKVIDIAPMSESRADFVIKATQELGSSTIRFIASYEDAQQQKVDAVRHVTLSVRPIMPKQFATQIQKVAAGKTVTSPLPMTLFPQHRQQSALFSAAPLALAQGVSTYLTHYDNYCTEQMISAAMPMVLFSKNPAYQPLLTALSRKAPQNVGSTGTHDTLEKAFKLLPSRQTEYGNYGIWNNVEEGNLFVTAYVAHFLIEARERHLVLPKAWFGQHGLFNNTISALEEQSVPQEGDSLATLRQRAYSAYLLTRLAKVPSNALLSIRTQLEQQFSAEEWQKDTVSAWLAAAYHMLKQDNEANKLIEPVINQLVAARPAQWTYDAYSDPLIKDSTMLYVIARHFPAQLSKVSDSVLERIVQDLNQQRYNTLSSSMVLLALDAYAQQHQSELANLQIQHQGKEISQSTPLFRFADLADTQMDISFVNNSQQPAWFALSQVGYPQNAAQQALSQGLEVDRSYTDKEGKPIRQVKIGDVIYVTVKIRASTDYVSDVIITDLYPAGFEVLWQQGAEDDFEDSWLAQHTELREDRLLSYLDAEKEMKVLKYQLKAVNIGTFQIPPIYAESMYDRAIKAYSASEGQIKVRK.

A signal peptide spans 1 to 21; that stretch reads MNKQYFLSLFSTLAVALTLSG. Cys22 is lipidated: N-palmitoyl cysteine. Cys22 carries the S-diacylglycerol cysteine lipid modification. A cross-link (isoglutamyl cysteine thioester (Cys-Gln)) is located at residues 1438-1441; it reads CTEQ.

The protein belongs to the protease inhibitor I39 (alpha-2-macroglobulin) family. Bacterial alpha-2-macroglobulin subfamily.

It localises to the cell membrane. In terms of biological role, protects the bacterial cell from host peptidases. In Pasteurella multocida (strain Pm70), this protein is Alpha-2-macroglobulin.